The primary structure comprises 776 residues: Ribosomal RNA large subunit methyltransferase K/L (776 aa).

In terms of domain architecture, THUMP spans 68 to 183 (DLYKICLWSR…DKQAELYLDL (116 aa)).

This sequence belongs to the methyltransferase superfamily. RlmKL family.

It is found in the cytoplasm. It carries out the reaction guanosine(2445) in 23S rRNA + S-adenosyl-L-methionine = N(2)-methylguanosine(2445) in 23S rRNA + S-adenosyl-L-homocysteine + H(+). The enzyme catalyses guanosine(2069) in 23S rRNA + S-adenosyl-L-methionine = N(2)-methylguanosine(2069) in 23S rRNA + S-adenosyl-L-homocysteine + H(+). Functionally, specifically methylates the guanine in position 2445 (m2G2445) and the guanine in position 2069 (m7G2069) of 23S rRNA. The sequence is that of Ribosomal RNA large subunit methyltransferase K/L from Psychrobacter cryohalolentis (strain ATCC BAA-1226 / DSM 17306 / VKM B-2378 / K5).